Consider the following 584-residue polypeptide: ATP-dependent lipid A-core flippase (584 aa).

Helical transmembrane passes span 15-35 (LLGYLLGYWKVLLLSMLSMAV), 63-83 (IMWVPLAIIGIYLIRGLAGFI), 153-173 (LGMLGLMLTTDWQLTLICLVV), 251-271 (TGVTQLMIACALAAILYFAGL), and 277-297 (GLTAGDFMVFLTAMLGLFAPV). Residues 27–309 (LLSMLSMAVA…ISSVSQAMQR (283 aa)) enclose the ABC transmembrane type-1 domain. The ABC transporter domain maps to 341-576 (LSFDAVSFAY…GGLYARLHSL (236 aa)). An ATP-binding site is contributed by 375–382 (GSSGSGKT).

This sequence belongs to the ABC transporter superfamily. Lipid exporter (TC 3.A.1.106) family. In terms of assembly, homodimer.

The protein localises to the cell inner membrane. The enzyme catalyses ATP + H2O + lipid A-core oligosaccharideSide 1 = ADP + phosphate + lipid A-core oligosaccharideSide 2.. Involved in lipopolysaccharide (LPS) biosynthesis. Translocates lipid A-core from the inner to the outer leaflet of the inner membrane. Transmembrane domains (TMD) form a pore in the inner membrane and the ATP-binding domain (NBD) is responsible for energy generation. The polypeptide is ATP-dependent lipid A-core flippase (Chromobacterium violaceum (strain ATCC 12472 / DSM 30191 / JCM 1249 / CCUG 213 / NBRC 12614 / NCIMB 9131 / NCTC 9757 / MK)).